Consider the following 329-residue polypeptide: Fructose-1,6-bisphosphatase class 1 (329 aa).

Residues Glu84, Asp103, Leu105, and Asp106 each contribute to the Mg(2+) site. Substrate-binding positions include 106 to 109 (DGSS), Asn196, and Lys262. A Mg(2+)-binding site is contributed by Glu268.

The protein belongs to the FBPase class 1 family. In terms of assembly, homotetramer. Mg(2+) is required as a cofactor.

The protein resides in the cytoplasm. It catalyses the reaction beta-D-fructose 1,6-bisphosphate + H2O = beta-D-fructose 6-phosphate + phosphate. It functions in the pathway carbohydrate biosynthesis; gluconeogenesis. The protein is Fructose-1,6-bisphosphatase class 1 of Shewanella pealeana (strain ATCC 700345 / ANG-SQ1).